The chain runs to 511 residues: Cytochrome P450 monooxyhenase eriC (511 aa).

Residues 2–22 traverse the membrane as a helical segment; sequence VLADFISIPTVSIACLAVLGI. A heme-binding site is contributed by C445.

Belongs to the cytochrome P450 family. Heme is required as a cofactor.

It localises to the membrane. The catalysed reaction is erinacol + reduced [NADPH--hemoprotein reductase] + O2 = cyathadiol + oxidized [NADPH--hemoprotein reductase] + H2O + H(+). The protein operates within secondary metabolite biosynthesis. Cytochrome P450 monooxygenase; part of the gene cluster that mediates the biosynthesis of erinacines, cyathane-xylosides that show unique biological activities, including leishmanicidal activity, stimulating activity for nerve growth-factor synthesis, and agonistic activity toward the kappa opioid receptor. Within the pathway, eriC hydroxylates erinacol at C-15 of the seven-membered ring to yield cyathadiol. The first step of the erinacines biosynthesis pathway is catalyzed by the geranylgeranyl diphosphate (GGPP) synthase eriE via conversion of farnesyl pyrophosphate and isopentyl pyrophosphate into geranylgeranyl pyrophosphate (GGPP). GGPP is then substrate of the diterpene cyclase eriG for the production of cyatha-3,12-diene. The cytochrome P450 monooxygenase eriI then hydroxylates cyatha-3,12-diene at C-14 of the seven-membered ring to produce erinacol, which is further hydroxylated at C-15 by the cytochrome P450 monooxygenase eriC to yield cyathadiol. The cytochrome P450 monooxygenase eriA then catalyzes C-11 hydroxylation in the presence of the short chain dehydrogenase/reductase (SDR) eriH, which leads to the production of cyathatriol. The acetyltransferase eriL converts cyathatriol into 11-O-acetyl-cyathatriol. The SDR eriH catalyzes further oxidation of 11-O-acetyl-cyathatriol into 1-O-acetylcyathin A3. Finally, the glycosyl transferase eriJ tranfers xylose from UDP-xylose onto C-14 of 11-O-acetyl-cyathatriol to form eracine Q. EriJ is also able to convert 11-O-acetyl-cyathatriol to eracine Q2 by using UDP-D-glucose as cosubstrate, but at a lower rate. The sequence is that of Cytochrome P450 monooxyhenase eriC from Hericium erinaceus (Lion's mane mushroom).